The primary structure comprises 258 residues: 5'-nucleotidase SurE (258 aa).

Asp9, Asp10, Ser42, and Asn96 together coordinate a divalent metal cation.

It belongs to the SurE nucleotidase family. The cofactor is a divalent metal cation.

The protein localises to the cytoplasm. The catalysed reaction is a ribonucleoside 5'-phosphate + H2O = a ribonucleoside + phosphate. Nucleotidase that shows phosphatase activity on nucleoside 5'-monophosphates. The protein is 5'-nucleotidase SurE of Campylobacter jejuni subsp. jejuni serotype O:2 (strain ATCC 700819 / NCTC 11168).